The primary structure comprises 345 residues: Anthranilate phosphoribosyltransferase (345 aa).

Residues Gly84, 87-88 (GD), Thr92, 94-97 (NIST), 112-120 (KHGGRSVSS), and Ser124 each bind 5-phospho-alpha-D-ribose 1-diphosphate. Gly84 is an anthranilate binding site. Ser96 provides a ligand contact to Mg(2+). Residue Arg170 participates in anthranilate binding. Positions 229 and 230 each coordinate Mg(2+).

This sequence belongs to the anthranilate phosphoribosyltransferase family. As to quaternary structure, homodimer. Requires Mg(2+) as cofactor.

The catalysed reaction is N-(5-phospho-beta-D-ribosyl)anthranilate + diphosphate = 5-phospho-alpha-D-ribose 1-diphosphate + anthranilate. It functions in the pathway amino-acid biosynthesis; L-tryptophan biosynthesis; L-tryptophan from chorismate: step 2/5. In terms of biological role, catalyzes the transfer of the phosphoribosyl group of 5-phosphorylribose-1-pyrophosphate (PRPP) to anthranilate to yield N-(5'-phosphoribosyl)-anthranilate (PRA). The protein is Anthranilate phosphoribosyltransferase of Herminiimonas arsenicoxydans.